Consider the following 205-residue polypeptide: Anaerobic dimethyl sulfoxide reductase chain B (205 aa).

4Fe-4S ferredoxin-type domains lie at 4–32 (YGFYFDSERCTGCKTCELACKDYKDLGTE), 57–89 (NIFAYYMSISCNHCADPACTKVCPTGAMHKNAD), and 90–119 (GFVIVNEEICIGCRYCHMACPYDAPQYDAQ). [4Fe-4S] cluster contacts are provided by Cys13, Cys16, Cys19, Cys23, Cys67, Cys70, Cys75, Cys79, Cys99, Cys102, Cys105, Cys109, Cys126, Cys129, Cys141, and Cys145.

As to quaternary structure, heterotrimeric enzyme composed of a catalytic heterodimer (DmsAB) and a membrane anchor protein (DmsC). [4Fe-4S] cluster serves as cofactor.

Functionally, electron transfer subunit of the terminal reductase during anaerobic growth on various sulfoxide and N-oxide compounds. This is Anaerobic dimethyl sulfoxide reductase chain B (dmsB) from Haemophilus influenzae (strain ATCC 51907 / DSM 11121 / KW20 / Rd).